Reading from the N-terminus, the 681-residue chain is MSNDVYFESIHMQSNYEEFETQAQERENISKISTSLSKFRKMSPKSTRSFKVKSAPLTNRKARNRIKSINAHVSAQYKVSNGQQNDDILDFFLKRKHNISSILEGVEDLENRNIVSNDTPQPSDNTGNYSSQLFTQEEWFQILRRIKLRFPKLSARTRKSLKYVTTKLEHLKNINSDDDSPQLWTQAASLPEEGLVNEDMKWLYELDDEQMDIGSSFCNVDEDSDQKLFVLTLSQAMGEREKSEPDVEIISDSSPEPTQLLNDGIIEEEHEVDEEEEDNENEEKSEKQLASSPTQISSDDTQEQLTNRAEISSYEASSLFPNTLETQKQPVKSTIQKQASVVVPDYPKISNVKDEEIILSSSPTRDNEIFQTPRKYSVESVRSSPSSRSGRLGRLMVSPLKLLSPDRLDASQSVYSTARSSPTKQKRVRGREVNEKIVRKRFKTSRVEVAGNFHLKASDDLKIVSTVDKVNGSEVEDSEDDDHSVSIIEITHEVNDEELKAVDEEVTGEAEDGPSIIQVPSSPGNENLQEDLTSMQTSIASVTQEVPSNYTATQMRQALRSLDFPPERSKEGMASSLTRAASIAGTSVSSLLTPDAPYEEVKNQIYSAISESVKKDQLWHERVLSYEPIVLEEFKQWLGELDKDLKFDVTFLQQYCDHMGITTTIGTTTGTTAGTNTTTTD.

Disordered regions lie at residues 239–305 (EREK…QEQL) and 505–528 (EVTGEAEDGPSIIQVPSSPGNENL). Positions 251–261 (SDSSPEPTQLL) are enriched in polar residues. The span at 265-281 (IIEEEHEVDEEEEDNEN) shows a compositional bias: acidic residues. Polar residues-rich tracts occupy residues 288 to 305 (QLASSPTQISSDDTQEQL) and 518 to 528 (QVPSSPGNENL).

The protein belongs to the SLX4 family. As to quaternary structure, forms a heterodimer with SLX1. Post-translationally, phosphorylated in response to DNA damage.

The protein resides in the nucleus. Functionally, regulatory subunit of the SLX1-SLX4 structure-specific endonuclease that resolves DNA secondary structures generated during DNA repair and recombination. Has endonuclease activity towards branched DNA substrates, introducing single-strand cuts in duplex DNA close to junctions with ss-DNA. The sequence is that of Structure-specific endonuclease subunit SLX4 from Meyerozyma guilliermondii (strain ATCC 6260 / CBS 566 / DSM 6381 / JCM 1539 / NBRC 10279 / NRRL Y-324) (Yeast).